The sequence spans 395 residues: HCLS1-binding protein 3 (395 aa).

M1 bears the N-acetylmethionine mark. At S3 the chain carries Phosphoserine. The PX domain occupies 19–142 (GLDLSVPQHQ…EFLGTRAPGA (124 aa)). Disordered regions lie at residues 143–310 (TGLA…KELF) and 322–374 (LGSE…AMDE). A compositionally biased stretch (acidic residues) spans 162 to 174 (DSDEAFDFFEQQD). The residue at position 191 (S191) is a Phosphoserine. A compositionally biased stretch (acidic residues) spans 194–206 (GEEEEEEEEEEVL). Basic and acidic residues-rich tracts occupy residues 249–260 (SDKKVSETRRPL) and 299–310 (RPEHGDASKELF). Position 254 is a phosphoserine (S254). A compositionally biased stretch (pro residues) spans 329–339 (KPQTKPKPLVP). K341 bears the N6-acetyllysine mark.

As to quaternary structure, binds HCLS1. Interacts with the SH3 domain of HCLS1 in vitro. As to expression, ubiquitously expressed.

Functionally, may be a modulator of IL-2 signaling. The sequence is that of HCLS1-binding protein 3 (Hs1bp3) from Mus musculus (Mouse).